Here is a 159-residue protein sequence, read N- to C-terminus: Ubiquitin-like protein ATG12 (159 aa).

The interval 1–40 (MASPQPPFGGGSNSNSNTASPSNNLSPTASPLLEGRDSPN) is disordered. Residues 13–27 (NSNSNTASPSNNLSP) show a composition bias toward low complexity. Gly-159 is covalently cross-linked (Glycyl lysine isopeptide (Gly-Lys) (interchain with K-218 in ATG5)).

Belongs to the ATG12 family. As to quaternary structure, forms a conjugate with ATG5. Forms a thioester bond with the 'Cys-116' of ATG10. Interacts with the ATG7 C-terminal 40 amino acids domain. The ATG12-ATG5 conjugate forms a complex with several units of ATG16. The ATG12-ATG5 conjugate also associates with ATG3.

Its subcellular location is the preautophagosomal structure membrane. The protein resides in the cytoplasm. Ubiquitin-like protein involved in cytoplasm to vacuole transport (Cvt), autophagy vesicles formation, mitophagy, and nucleophagy. Conjugation with ATG5 through a ubiquitin-like conjugating system involving also ATG7 as an E1-like activating enzyme and ATG10 as an E2-like conjugating enzyme, is essential for its function. The ATG12-ATG5 conjugate acts as an E3-like enzyme which is required for lipidation of ATG8 and ATG8 association to the vesicle membranes. ATG12-ATG5 rearranges the ATG3 catalytic center and enhances its E2 activity. Plays a role in sexual development and perithecia formation. In Sordaria macrospora (strain ATCC MYA-333 / DSM 997 / K(L3346) / K-hell), this protein is Ubiquitin-like protein ATG12.